Here is an 875-residue protein sequence, read N- to C-terminus: Probable inorganic carbon transporter subunit DabA (875 aa).

Zn(2+) is bound by residues cysteine 380, aspartate 382, histidine 563, and cysteine 578.

The protein belongs to the inorganic carbon transporter (TC 9.A.2) DabA family. Forms a complex with DabB. Zn(2+) is required as a cofactor.

It localises to the cell membrane. Functionally, part of an energy-coupled inorganic carbon pump. In Geobacillus thermodenitrificans (strain NG80-2), this protein is Probable inorganic carbon transporter subunit DabA.